The primary structure comprises 402 residues: Argininosuccinate synthase (402 aa).

ATP-binding positions include 10 to 18 and Ala-38; that span reads AYSGGVDTS. Tyr-89 is an L-citrulline binding site. Gly-119 provides a ligand contact to ATP. L-aspartate contacts are provided by Thr-121, Asn-125, and Asp-126. Asn-125 lines the L-citrulline pocket. L-citrulline-binding residues include Arg-129, Ser-177, Ser-186, Glu-262, and Tyr-274.

Belongs to the argininosuccinate synthase family. Type 1 subfamily. Homotetramer.

Its subcellular location is the cytoplasm. The catalysed reaction is L-citrulline + L-aspartate + ATP = 2-(N(omega)-L-arginino)succinate + AMP + diphosphate + H(+). Its pathway is amino-acid biosynthesis; L-arginine biosynthesis; L-arginine from L-ornithine and carbamoyl phosphate: step 2/3. In Prochlorococcus marinus (strain SARG / CCMP1375 / SS120), this protein is Argininosuccinate synthase.